We begin with the raw amino-acid sequence, 137 residues long: DNA-directed RNA polymerase subunit omega (137 aa).

Positions 78-137 (DEPEPEAVPLLSSSPAAAAVAPQAASGDDNDIQFDRMSEEDLLRGLENLAPPTETEDEGD) are disordered. The span at 84–103 (AVPLLSSSPAAAAVAPQAAS) shows a compositional bias: low complexity. Positions 110-121 (QFDRMSEEDLLR) are enriched in basic and acidic residues.

It belongs to the RNA polymerase subunit omega family. In terms of assembly, the RNAP catalytic core consists of 2 alpha, 1 beta, 1 beta' and 1 omega subunit. When a sigma factor is associated with the core the holoenzyme is formed, which can initiate transcription.

It carries out the reaction RNA(n) + a ribonucleoside 5'-triphosphate = RNA(n+1) + diphosphate. Promotes RNA polymerase assembly. Latches the N- and C-terminal regions of the beta' subunit thereby facilitating its interaction with the beta and alpha subunits. This is DNA-directed RNA polymerase subunit omega from Methylobacterium sp. (strain 4-46).